Reading from the N-terminus, the 366-residue chain is ACP-SH:acetate ligase (366 aa).

Its subcellular location is the cytoplasm. The catalysed reaction is holo-[ACP] + acetate + ATP = acetyl-[ACP] + AMP + diphosphate. Functionally, acyl-carrier protein (ACP) acetate ligase of the biotin-dependent malonate decarboxylase multienzyme complex (EC 7.2.4.4). Involved in the conversion of the thiol group of the ACP-bound 2'-(5-phosphoribosyl)-3'-dephospho-CoA prosthetic group into its acetyl thioester using the energy from the hydrolysis of ATP. In Malonomonas rubra, this protein is ACP-SH:acetate ligase (madH).